A 409-amino-acid chain; its full sequence is Peptidase T (409 aa).

Residue histidine 78 coordinates Zn(2+). Aspartate 80 is an active-site residue. Position 140 (aspartate 140) interacts with Zn(2+). The active-site Proton acceptor is glutamate 174. Zn(2+) contacts are provided by glutamate 175, aspartate 197, and histidine 379.

This sequence belongs to the peptidase M20B family. It depends on Zn(2+) as a cofactor.

It is found in the cytoplasm. The enzyme catalyses Release of the N-terminal residue from a tripeptide.. In terms of biological role, cleaves the N-terminal amino acid of tripeptides. This chain is Peptidase T, found in Photobacterium profundum (strain SS9).